The following is a 243-amino-acid chain: Isoprenyl transferase 2 (243 aa).

Asp23 is an active-site residue. Asp23 is a binding site for Mg(2+). Residues 24 to 27 (GNGR), Trp28, Arg36, His40, and 68 to 70 (STE) contribute to the substrate site. The Proton acceptor role is filled by Asn71. Residues Trp72, Arg74, Arg191, and 197–199 (RTS) contribute to the substrate site. Glu210 is a binding site for Mg(2+).

It belongs to the UPP synthase family. As to quaternary structure, homodimer. The cofactor is Mg(2+).

Catalyzes the condensation of isopentenyl diphosphate (IPP) with allylic pyrophosphates generating different type of terpenoids. The sequence is that of Isoprenyl transferase 2 from Corynebacterium efficiens (strain DSM 44549 / YS-314 / AJ 12310 / JCM 11189 / NBRC 100395).